A 111-amino-acid chain; its full sequence is Mitochondrial import inner membrane translocase subunit Tim10B (111 aa).

The short motif at 24 to 48 (CFNACARDYTTSTLTKDEGSCVSQC) is the Twin CX3C motif element. Intrachain disulfides connect C24-C48 and C28-C44. Positions 73-111 (KQGEQSPTEAIKSAKPEPAVPAPEATPVETTPVIEENKQ) are disordered. Residues 94-105 (APEATPVETTPV) are compositionally biased toward low complexity.

Belongs to the small Tim family. Component of the TIM22 complex, whose core is composed of tim-22, associated with peripheral protein tin-9.2/tim-10b and the 70 kDa heterohexamer. In most cases, the 70 kDa complex is composed of TIMM9 and TIMM10.

The protein resides in the mitochondrion inner membrane. Functionally, component of the TIM22 complex, a complex that mediates the import and insertion of multi-pass transmembrane proteins into the mitochondrial inner membrane. The TIM22 complex forms a twin-pore translocase that uses the membrane potential as the external driving force. In the TIM22 complex, it may act as a docking point for the soluble 70 kDa complex that guides the target proteins in transit through the aqueous mitochondrial intermembrane space. The chain is Mitochondrial import inner membrane translocase subunit Tim10B (tin-9.2) from Caenorhabditis elegans.